We begin with the raw amino-acid sequence, 314 residues long: Olfactory receptor 5P68 (314 aa).

At 1–28 (MAFLHNGNHTAVTEFILLGLTDDPVFRV) the chain is on the extracellular side. N-linked (GlcNAc...) asparagine glycosylation occurs at asparagine 8. A helical membrane pass occupies residues 29 to 49 (ILFTIILCIYLVTVSGNLSTI). Over 50 to 57 (LLIRVSSQ) the chain is Cytoplasmic. Residues 58 to 78 (LHHPMYFFLSHLASVDIGYSS) traverse the membrane as a helical segment. Over 79-102 (SVTPNMLANFLVEKNTISYLGCTI) the chain is Extracellular. Cysteine 100 and cysteine 192 are joined by a disulfide. The helical transmembrane segment at 103-123 (QLSLAAFCGTVECFLLATMAY) threads the bilayer. Over 124 to 136 (DRFMAICSPLLYS) the chain is Cytoplasmic. The chain crosses the membrane as a helical span at residues 137 to 157 (TKMSTQVCIQLIVGSYIGGFL). At 158–199 (NASSFTLFFLSFLFCGPNRINHFYCDFAPLVALSCSDVSVSE) the chain is on the extracellular side. Residues 200–220 (VVTSFFSGSVTMITMLVIAIS) traverse the membrane as a helical segment. Topologically, residues 221–240 (YTYILITILKMRSTEGRHKA) are cytoplasmic. The helical transmembrane segment at 241–261 (FSTCTSHLTAVTLFYGTITFI) threads the bilayer. Topologically, residues 262 to 274 (YVMPKSSFSTDQN) are extracellular. The chain crosses the membrane as a helical span at residues 275-295 (KVVSVFYMVVIPMLNPLIYSL). At 296–314 (RNNEIKDALKRHLGKKIFS) the chain is on the cytoplasmic side.

It belongs to the G-protein coupled receptor 1 family.

Its subcellular location is the cell membrane. Functionally, potential odorant receptor. The sequence is that of Olfactory receptor 5P68 from Mus musculus (Mouse).